The following is a 304-amino-acid chain: N-acetylmuramic acid 6-phosphate etherase (304 aa).

Residues 58–221 (IVDRMKQGGR…TTASMVKMGK (164 aa)) form the SIS domain. Residue Glu86 is the Proton donor of the active site. Residue Glu117 is part of the active site.

The protein belongs to the GCKR-like family. MurNAc-6-P etherase subfamily. Homodimer.

It catalyses the reaction N-acetyl-D-muramate 6-phosphate + H2O = N-acetyl-D-glucosamine 6-phosphate + (R)-lactate. It participates in amino-sugar metabolism; N-acetylmuramate degradation. Functionally, specifically catalyzes the cleavage of the D-lactyl ether substituent of MurNAc 6-phosphate, producing GlcNAc 6-phosphate and D-lactate. This Clostridioides difficile (strain 630) (Peptoclostridium difficile) protein is N-acetylmuramic acid 6-phosphate etherase.